A 58-amino-acid polypeptide reads, in one-letter code: uncharacterized protein (58 aa).

Positions 23–51 (TTTSTSTTTTSTTTSTTTSTTTTTTTTTT) are enriched in low complexity. Residues 23–58 (TTTSTSTTTTSTTTSTTTSTTTTTTTTTTKDFNTET) form a disordered region.

This is an uncharacterized protein from Dictyostelium discoideum (Social amoeba).